Reading from the N-terminus, the 79-residue chain is uncharacterized protein (79 aa).

2 consecutive transmembrane segments (helical) span residues 28 to 48 (CIIL…ALLA) and 51 to 71 (VALT…AFTV).

It localises to the cell membrane. This is an uncharacterized protein from Methanocaldococcus jannaschii (strain ATCC 43067 / DSM 2661 / JAL-1 / JCM 10045 / NBRC 100440) (Methanococcus jannaschii).